The following is a 234-amino-acid chain: Large ribosomal subunit protein uL1 (234 aa).

This sequence belongs to the universal ribosomal protein uL1 family. In terms of assembly, part of the 50S ribosomal subunit.

In terms of biological role, binds directly to 23S rRNA. The L1 stalk is quite mobile in the ribosome, and is involved in E site tRNA release. Functionally, protein L1 is also a translational repressor protein, it controls the translation of the L11 operon by binding to its mRNA. The polypeptide is Large ribosomal subunit protein uL1 (Erwinia tasmaniensis (strain DSM 17950 / CFBP 7177 / CIP 109463 / NCPPB 4357 / Et1/99)).